The chain runs to 104 residues: Large ribosomal subunit protein uL24 (104 aa).

It belongs to the universal ribosomal protein uL24 family. Part of the 50S ribosomal subunit.

Functionally, one of two assembly initiator proteins, it binds directly to the 5'-end of the 23S rRNA, where it nucleates assembly of the 50S subunit. In terms of biological role, one of the proteins that surrounds the polypeptide exit tunnel on the outside of the subunit. This Yersinia enterocolitica serotype O:8 / biotype 1B (strain NCTC 13174 / 8081) protein is Large ribosomal subunit protein uL24.